The sequence spans 235 residues: Casparian strip membrane protein 2 (235 aa).

The Cytoplasmic segment spans residues 1 to 70 (MTSESATVIQ…RSGAEGFRRC (70 aa)). Residues 71 to 91 (LAVIDFLLRVAAFGPTLAAAI) form a helical membrane-spanning segment. Residues 92–118 (STGTADERLSVFTNFFQFHARFDDFPA) are Extracellular-facing. Residues 119–139 (FTFFLVANAVAAGYLVLSLPF) form a helical membrane-spanning segment. The Cytoplasmic portion of the chain corresponds to 140 to 162 (SVVVILRPNKATGGVRLLLLLCD). Residues 163-183 (VLIMALLTAAGAAAAAIVYVA) traverse the membrane as a helical segment. At 184 to 210 (HSGNRRANWVPICMQFHGFCQRTSGSV) the chain is on the extracellular side. Residues 211 to 231 (VATFLAVLVFIVLILMAACVI) form a helical membrane-spanning segment. Topologically, residues 232–235 (RRSK) are cytoplasmic.

It belongs to the Casparian strip membrane proteins (CASP) family. In terms of assembly, homodimer and heterodimers.

It is found in the cell membrane. In terms of biological role, regulates membrane-cell wall junctions and localized cell wall deposition. Required for establishment of the Casparian strip membrane domain (CSD) and the subsequent formation of Casparian strips, a cell wall modification of the root endodermis that determines an apoplastic barrier between the intraorganismal apoplasm and the extraorganismal apoplasm and prevents lateral diffusion. The chain is Casparian strip membrane protein 2 from Sorghum bicolor (Sorghum).